Consider the following 414-residue polypeptide: 2,3-diketo-5-methylthiopentyl-1-phosphate enolase (414 aa).

Catalysis depends on K99, which acts as the Proton acceptor. Residues K148, 174-177 (KDDE), H265, G338, and 360-361 (GG) contribute to the substrate site. The Mg(2+) site is built by K174, D176, and E177. N6-carboxylysine is present on K174.

This sequence belongs to the RuBisCO large chain family. Type IV subfamily. Homodimer. It depends on Mg(2+) as a cofactor.

It carries out the reaction 5-methylsulfanyl-2,3-dioxopentyl phosphate = 2-hydroxy-5-methylsulfanyl-3-oxopent-1-enyl phosphate. The protein operates within amino-acid biosynthesis; L-methionine biosynthesis via salvage pathway; L-methionine from S-methyl-5-thio-alpha-D-ribose 1-phosphate: step 3/6. Functionally, catalyzes the enolization of 2,3-diketo-5-methylthiopentyl-1-phosphate (DK-MTP-1-P) into 2-hydroxy-3-keto-5-methylthiopentenyl-1-phosphate (HK-MTPenyl-1-P). The sequence is that of 2,3-diketo-5-methylthiopentyl-1-phosphate enolase from Bacillus cereus (strain B4264).